The chain runs to 1400 residues: DNA-directed RNA polymerase subunit beta' (1400 aa).

Residues Cys-70, Cys-72, Cys-85, and Cys-88 each contribute to the Zn(2+) site. Mg(2+)-binding residues include Asp-460, Asp-462, and Asp-464. Residues Cys-814, Cys-888, Cys-895, and Cys-898 each contribute to the Zn(2+) site. The interval 1367–1400 is disordered; it reads DRQAKRAEAQEGPSAEQATDNLAALLNAGFSSDE.

The protein belongs to the RNA polymerase beta' chain family. In terms of assembly, the RNAP catalytic core consists of 2 alpha, 1 beta, 1 beta' and 1 omega subunit. When a sigma factor is associated with the core the holoenzyme is formed, which can initiate transcription. The cofactor is Mg(2+). Requires Zn(2+) as cofactor.

The catalysed reaction is RNA(n) + a ribonucleoside 5'-triphosphate = RNA(n+1) + diphosphate. In terms of biological role, DNA-dependent RNA polymerase catalyzes the transcription of DNA into RNA using the four ribonucleoside triphosphates as substrates. This is DNA-directed RNA polymerase subunit beta' from Vibrio campbellii (strain ATCC BAA-1116).